The following is a 229-amino-acid chain: GTP cyclohydrolase 1 (229 aa).

Zn(2+) is bound by residues Cys-116, His-119, and Cys-187.

The protein belongs to the GTP cyclohydrolase I family. As to quaternary structure, toroid-shaped homodecamer, composed of two pentamers of five dimers.

The catalysed reaction is GTP + H2O = 7,8-dihydroneopterin 3'-triphosphate + formate + H(+). Its pathway is cofactor biosynthesis; 7,8-dihydroneopterin triphosphate biosynthesis; 7,8-dihydroneopterin triphosphate from GTP: step 1/1. This chain is GTP cyclohydrolase 1, found in Synechococcus sp. (strain JA-3-3Ab) (Cyanobacteria bacterium Yellowstone A-Prime).